Consider the following 54-residue polypeptide: Protein YmjE (54 aa).

The protein is Protein YmjE of Escherichia coli (strain K12).